The sequence spans 384 residues: Tryptophan--tRNA ligase (384 aa).

The 'HIGH' region motif lies at 81–89 (PSGPMHIGH). A 'KMSKS' region motif is present at residues 252-256 (KMSAS).

Belongs to the class-I aminoacyl-tRNA synthetase family.

It localises to the cytoplasm. The catalysed reaction is tRNA(Trp) + L-tryptophan + ATP = L-tryptophyl-tRNA(Trp) + AMP + diphosphate + H(+). The sequence is that of Tryptophan--tRNA ligase from Thermococcus sibiricus (strain DSM 12597 / MM 739).